Reading from the N-terminus, the 476-residue chain is Protein transport protein Sec61 subunit alpha isoform 1 (476 aa).

The Cytoplasmic portion of the chain corresponds to Ala2–Phe28. A helical transmembrane segment spans residues Lys29–Cys46. Residues Gln47–Gly80 are Lumenal-facing. A helical transmembrane segment spans residues Ile81 to Ala97. Residues Lys98 to Arg109 are Cytoplasmic-facing. The chain crosses the membrane as a helical span at residues Ala110–Tyr131. At Val132–Cys148 the chain is on the lumenal side. A helical membrane pass occupies residues Leu149–Glu167. The Cytoplasmic portion of the chain corresponds to Leu168–Ser177. A helical transmembrane segment spans residues Gly178 to Phe196. The Lumenal segment spans residues Ser197–Asn241. A helical transmembrane segment spans residues Leu242–Gln259. The Cytoplasmic segment spans residues Gly260–Tyr285. The chain crosses the membrane as a helical span at residues Thr286 to Gln306. The Lumenal portion of the chain corresponds to Met307–Glu356. Residues Asp357–Trp379 form a helical membrane-spanning segment. Residues Ile380–Ala420 are Cytoplasmic-facing. Residues Ala421–Phe437 form a helical membrane-spanning segment. Over Leu438–Ser443 the chain is Lumenal. A helical transmembrane segment spans residues Gly444–Phe458. The Cytoplasmic segment spans residues Glu459–Phe476.

It belongs to the SecY/SEC61-alpha family. In terms of assembly, the SEC61 channel-forming translocon complex consists of channel-forming core components SEC61A1, SEC61B and SEC61G and different auxiliary components such as SEC62 and SEC63. The SEC61 channel associates with the multi-pass translocon (MPT) complex.

Its subcellular location is the endoplasmic reticulum membrane. Its function is as follows. Component of SEC61 channel-forming translocon complex that mediates transport of signal peptide-containing precursor polypeptides across the endoplasmic reticulum (ER). Forms a ribosome receptor and a gated pore in the ER membrane, both functions required for cotranslational translocation of nascent polypeptides. May cooperate with auxiliary protein SEC62, SEC63 and HSPA5/BiP to enable post-translational transport of small presecretory proteins. The SEC61 channel is also involved in ER membrane insertion of transmembrane proteins: it mediates membrane insertion of the first few transmembrane segments of proteins, while insertion of subsequent transmembrane regions of multi-pass membrane proteins is mediated by the multi-pass translocon (MPT) complex. The SEC61 channel cooperates with the translocating protein TRAM1 to import nascent proteins into the ER. Controls the passive efflux of calcium ions from the ER lumen to the cytosol through SEC61 channel, contributing to the maintenance of cellular calcium homeostasis. Plays a critical role in nephrogenesis, specifically at pronephros stage. The sequence is that of Protein transport protein Sec61 subunit alpha isoform 1 (SEC61A1) from Canis lupus familiaris (Dog).